A 150-amino-acid chain; its full sequence is Large ribosomal subunit protein uL22c (150 aa).

This sequence belongs to the universal ribosomal protein uL22 family. Part of the 50S ribosomal subunit.

It localises to the plastid. In terms of biological role, this protein binds specifically to 23S rRNA. Its function is as follows. The globular domain of the protein is located near the polypeptide exit tunnel on the outside of the subunit, while an extended beta-hairpin is found that lines the wall of the exit tunnel in the center of the 70S ribosome. This chain is Large ribosomal subunit protein uL22c (rpl22), found in Orobanche minor (Small broomrape).